A 485-amino-acid chain; its full sequence is Cobyric acid synthase (485 aa).

The region spanning 249-437 (HLKIRVPVWQ…WHGLFSQPSA (189 aa)) is the GATase cobBQ-type domain. Cysteine 330 acts as the Nucleophile in catalysis. Histidine 429 is an active-site residue.

This sequence belongs to the CobB/CobQ family. CobQ subfamily.

Its pathway is cofactor biosynthesis; adenosylcobalamin biosynthesis. Catalyzes amidations at positions B, D, E, and G on adenosylcobyrinic A,C-diamide. NH(2) groups are provided by glutamine, and one molecule of ATP is hydrogenolyzed for each amidation. This chain is Cobyric acid synthase, found in Saccharophagus degradans (strain 2-40 / ATCC 43961 / DSM 17024).